A 105-amino-acid chain; its full sequence is MAPVKSQESINQKLALVIKSGKYTLGYKSTVKSLRQGKSKLIIIAANTPVLRKSELEYYAMLSKTKVYYFQGGNNELGTAVGKLFRVGVVSILEAGDSDILTTLA.

Glycyl lysine isopeptide (Lys-Gly) (interchain with G-Cter in ubiquitin) cross-links involve residues lysine 22, lysine 53, and lysine 83.

It belongs to the eukaryotic ribosomal protein eL30 family. As to quaternary structure, component of the large ribosomal subunit (LSU). Mature yeast ribosomes consist of a small (40S) and a large (60S) subunit. The 40S small subunit contains 1 molecule of ribosomal RNA (18S rRNA) and 33 different proteins (encoded by 57 genes). The large 60S subunit contains 3 rRNA molecules (25S, 5.8S and 5S rRNA) and 46 different proteins (encoded by 81 genes).

The protein localises to the cytoplasm. Component of the ribosome, a large ribonucleoprotein complex responsible for the synthesis of proteins in the cell. The small ribosomal subunit (SSU) binds messenger RNAs (mRNAs) and translates the encoded message by selecting cognate aminoacyl-transfer RNA (tRNA) molecules. The large subunit (LSU) contains the ribosomal catalytic site termed the peptidyl transferase center (PTC), which catalyzes the formation of peptide bonds, thereby polymerizing the amino acids delivered by tRNAs into a polypeptide chain. The nascent polypeptides leave the ribosome through a tunnel in the LSU and interact with protein factors that function in enzymatic processing, targeting, and the membrane insertion of nascent chains at the exit of the ribosomal tunnel. The chain is Large ribosomal subunit protein eL30 from Saccharomyces cerevisiae (strain ATCC 204508 / S288c) (Baker's yeast).